The sequence spans 315 residues: Methionyl-tRNA formyltransferase (315 aa).

A (6S)-5,6,7,8-tetrahydrofolate-binding site is contributed by 110-113; that stretch reads SLLP.

This sequence belongs to the Fmt family.

The enzyme catalyses L-methionyl-tRNA(fMet) + (6R)-10-formyltetrahydrofolate = N-formyl-L-methionyl-tRNA(fMet) + (6S)-5,6,7,8-tetrahydrofolate + H(+). Attaches a formyl group to the free amino group of methionyl-tRNA(fMet). The formyl group appears to play a dual role in the initiator identity of N-formylmethionyl-tRNA by promoting its recognition by IF2 and preventing the misappropriation of this tRNA by the elongation apparatus. In Cutibacterium acnes (strain DSM 16379 / KPA171202) (Propionibacterium acnes), this protein is Methionyl-tRNA formyltransferase.